Here is a 366-residue protein sequence, read N- to C-terminus: Inositol 2-dehydrogenase (366 aa).

It belongs to the Gfo/Idh/MocA family. In terms of assembly, homotetramer.

The enzyme catalyses myo-inositol + NAD(+) = scyllo-inosose + NADH + H(+). Functionally, involved in the oxidation of myo-inositol (MI) to 2-keto-myo-inositol (2KMI or 2-inosose). This is Inositol 2-dehydrogenase from Rhodococcus jostii (strain RHA1).